Here is a 637-residue protein sequence, read N- to C-terminus: ATP-dependent zinc metalloprotease FtsH (637 aa).

Topologically, residues 1-44 (MAKHSQHSSPPRKLFDTLNDLWQRAKSEAGLSAEGPEGTRRRNN) are cytoplasmic. The chain crosses the membrane as a helical span at residues 45–65 (LILYLLLVLSTLYLLNGYQTL). The Periplasmic segment spans residues 66-141 (RNEEIPYSEF…TVRYGSNWFS (76 aa)). A helical transmembrane segment spans residues 142-162 (SLIFNWIVPIVLLTLFWTWMA). Over 163–637 (RRMTGGRGFL…VKAVIREAAS (475 aa)) the chain is Cytoplasmic. An ATP-binding site is contributed by 231-238 (GPPGTGKT). Zn(2+) is bound at residue histidine 454. Glutamate 455 is a catalytic residue. Positions 458 and 531 each coordinate Zn(2+).

This sequence in the central section; belongs to the AAA ATPase family. In the C-terminal section; belongs to the peptidase M41 family. In terms of assembly, homohexamer. The cofactor is Zn(2+).

The protein resides in the cell inner membrane. Its function is as follows. Acts as a processive, ATP-dependent zinc metallopeptidase for both cytoplasmic and membrane proteins. Plays a role in the quality control of integral membrane proteins. This Methylococcus capsulatus (strain ATCC 33009 / NCIMB 11132 / Bath) protein is ATP-dependent zinc metalloprotease FtsH.